A 277-amino-acid chain; its full sequence is Thymidylate synthase (277 aa).

Arg-21 is a binding site for dUMP. His-51 is a binding site for (6R)-5,10-methylene-5,6,7,8-tetrahydrofolate. 126–127 (RR) lines the dUMP pocket. The Nucleophile role is filled by Cys-159. Residues 179 to 182 (RSGD), Asn-190, and 220 to 222 (HLY) contribute to the dUMP site. (6R)-5,10-methylene-5,6,7,8-tetrahydrofolate is bound at residue Asp-182. Residue Ala-276 coordinates (6R)-5,10-methylene-5,6,7,8-tetrahydrofolate.

The protein belongs to the thymidylate synthase family. Bacterial-type ThyA subfamily. In terms of assembly, homodimer.

The protein localises to the cytoplasm. The catalysed reaction is dUMP + (6R)-5,10-methylene-5,6,7,8-tetrahydrofolate = 7,8-dihydrofolate + dTMP. Its pathway is pyrimidine metabolism; dTTP biosynthesis. Functionally, catalyzes the reductive methylation of 2'-deoxyuridine-5'-monophosphate (dUMP) to 2'-deoxythymidine-5'-monophosphate (dTMP) while utilizing 5,10-methylenetetrahydrofolate (mTHF) as the methyl donor and reductant in the reaction, yielding dihydrofolate (DHF) as a by-product. This enzymatic reaction provides an intracellular de novo source of dTMP, an essential precursor for DNA biosynthesis. The sequence is that of Thymidylate synthase from Alcanivorax borkumensis (strain ATCC 700651 / DSM 11573 / NCIMB 13689 / SK2).